The chain runs to 500 residues: Signal transduction histidine-protein kinase/phosphatase UhpB (500 aa).

The next 8 membrane-spanning stretches (helical) occupy residues 8 to 28 (LITV…LWSI), 78 to 98 (VALA…LPVA), 112 to 132 (LLLQ…PWLG), 140 to 160 (ALLL…VFWH), 185 to 205 (HLIW…GLPA), 207 to 224 (LSRF…ALAW), 231 to 249 (ALIA…QTWH), and 253 to 273 (VDLL…GAGI). The Cytoplasmic portion of the chain corresponds to 274 to 500 (QRLRELNQSL…VSVSLPQRYV (227 aa)). In terms of domain architecture, Histidine kinase spans 311-499 (ELHDDIGQTI…RVSVSLPQRY (189 aa)). H313 carries the post-translational modification Phosphohistidine; by autocatalysis.

In terms of processing, autophosphorylated.

It localises to the cell inner membrane. The catalysed reaction is ATP + protein L-histidine = ADP + protein N-phospho-L-histidine.. Part of the UhpABC signaling cascade that controls the expression of the hexose phosphate transporter UhpT. UhpB functions as a membrane-associated protein kinase that autophosphorylates in response to interaction with UhpC, and subsequently transfers its phosphate group to the response regulator UhpA. Can also dephosphorylate UhpA. In Salmonella typhimurium (strain LT2 / SGSC1412 / ATCC 700720), this protein is Signal transduction histidine-protein kinase/phosphatase UhpB (uhpB).